A 260-amino-acid chain; its full sequence is MPNLLEKTRKITSILQRSVDSLETELPYNTMASRLADIIDCNACIINGGGSLLGYAMKYKTNTDRVEEFFETRQFPDAYVKAASRVYDTEANLSVENELTIFPIESKDIYPDGLTTIAPIYGGGMRLGTLIIWRNDNEFSDDDLVLVEISSTVVGIQLLNLQTENLEETIRKQTVVNMAINTLSYSEMKAVAAILSELDGNEGRLTASVIADRIGITRSVIVNALRKLESAGIIESRSLGMKGTYLKVINEGIFDKLKEF.

The GAF domain stretch occupies residues 1–159 (MPNLLEKTRK…SSTVVGIQLL (159 aa)). Positions 207 to 226 (ASVIADRIGITRSVIVNALR) form a DNA-binding region, H-T-H motif.

The protein belongs to the CodY family.

The protein localises to the cytoplasm. DNA-binding global transcriptional regulator which is involved in the adaptive response to starvation and acts by directly or indirectly controlling the expression of numerous genes in response to nutrient availability. During rapid exponential growth, CodY is highly active and represses genes whose products allow adaptation to nutrient depletion. This Streptococcus equi subsp. equi (strain 4047) protein is Global transcriptional regulator CodY.